Reading from the N-terminus, the 75-residue chain is DNA-directed RNA polymerase subunit omega (75 aa).

The protein belongs to the RNA polymerase subunit omega family. As to quaternary structure, in cyanobacteria the RNAP catalytic core is composed of 2 alpha, 1 beta, 1 beta', 1 gamma and 1 omega subunit. When a sigma factor is associated with the core the holoenzyme is formed, which can initiate transcription.

The enzyme catalyses RNA(n) + a ribonucleoside 5'-triphosphate = RNA(n+1) + diphosphate. Functionally, promotes RNA polymerase assembly. Latches the N- and C-terminal regions of the beta' subunit thereby facilitating its interaction with the beta and alpha subunits. This is DNA-directed RNA polymerase subunit omega from Prochlorococcus marinus (strain MIT 9211).